The following is a 463-amino-acid chain: UDP-N-acetylmuramoylalanine--D-glutamate ligase (463 aa).

An ATP-binding site is contributed by 116-122; it reads GTNGKTT.

The protein belongs to the MurCDEF family.

The protein localises to the cytoplasm. The catalysed reaction is UDP-N-acetyl-alpha-D-muramoyl-L-alanine + D-glutamate + ATP = UDP-N-acetyl-alpha-D-muramoyl-L-alanyl-D-glutamate + ADP + phosphate + H(+). It functions in the pathway cell wall biogenesis; peptidoglycan biosynthesis. Cell wall formation. Catalyzes the addition of glutamate to the nucleotide precursor UDP-N-acetylmuramoyl-L-alanine (UMA). The protein is UDP-N-acetylmuramoylalanine--D-glutamate ligase of Synechococcus elongatus (strain ATCC 33912 / PCC 7942 / FACHB-805) (Anacystis nidulans R2).